Consider the following 358-residue polypeptide: Ribosomal RNA large subunit methyltransferase M (358 aa).

S-adenosyl-L-methionine contacts are provided by residues serine 187, 220-223 (CPGG), aspartate 239, aspartate 259, and aspartate 276. Lysine 305 acts as the Proton acceptor in catalysis.

This sequence belongs to the class I-like SAM-binding methyltransferase superfamily. RNA methyltransferase RlmE family. RlmM subfamily. In terms of assembly, monomer.

It localises to the cytoplasm. It carries out the reaction cytidine(2498) in 23S rRNA + S-adenosyl-L-methionine = 2'-O-methylcytidine(2498) in 23S rRNA + S-adenosyl-L-homocysteine + H(+). Its function is as follows. Catalyzes the 2'-O-methylation at nucleotide C2498 in 23S rRNA. The polypeptide is Ribosomal RNA large subunit methyltransferase M (Shewanella woodyi (strain ATCC 51908 / MS32)).